A 642-amino-acid chain; its full sequence is Probable glutamate--tRNA ligase, cytoplasmic (642 aa).

152–154 contributes to the L-glutamate binding site; sequence RFP. The short motif at 157–166 is the 'HIGH' region element; it reads PNGRLHIGHA. Histidine 162 provides a ligand contact to ATP. L-glutamate contacts are provided by residues aspartate 188, 326-330, and arginine 344; that span reads YDFAC. Residues glutamate 347 and 382-386 contribute to the ATP site; that span reads VLSKR. The 'KMSKS' region signature appears at 382-386; that stretch reads VLSKR.

Belongs to the class-I aminoacyl-tRNA synthetase family. Glutamate--tRNA ligase type 2 subfamily.

It localises to the cytoplasm. The enzyme catalyses tRNA(Glu) + L-glutamate + ATP = L-glutamyl-tRNA(Glu) + AMP + diphosphate. This Encephalitozoon cuniculi (strain GB-M1) (Microsporidian parasite) protein is Probable glutamate--tRNA ligase, cytoplasmic.